The primary structure comprises 186 residues: Fucolectin-6 (186 aa).

The first 32 residues, 1-32 (MKTCNLTDRMKVKMIMLLFQILAISTLQSVSA), serve as a signal peptide directing secretion. Residues 40–186 (QENVAVRGKA…VEVNAMLPAN (147 aa)) form an F5/8 type C-like region. Ca(2+) contacts are provided by Asn-67, Asp-70, Asn-72, and Ser-81. 3 disulfides stabilise this stretch: Cys-82-Cys-175, Cys-114-Cys-115, and Cys-137-Cys-153. Residues His-84 and Arg-111 each contribute to the alpha-L-fucose site. The short motif at 111–113 (RGD) is the Cell attachment site element. Position 118 (Arg-118) interacts with alpha-L-fucose. Residues Cys-175 and Glu-176 each coordinate Ca(2+).

It belongs to the fucolectin family. In terms of assembly, homotrimer. As to expression, gill mucous cells.

The protein resides in the secreted. Functionally, acts as a defensive agent. Recognizes blood group fucosylated oligosaccharides including A, B, H and Lewis B-type antigens. Does not recognize Lewis A antigen and has low affinity for monovalent haptens. The sequence is that of Fucolectin-6 from Anguilla japonica (Japanese eel).